A 688-amino-acid polypeptide reads, in one-letter code: Glycine--tRNA ligase beta subunit (688 aa).

It belongs to the class-II aminoacyl-tRNA synthetase family. Tetramer of two alpha and two beta subunits.

Its subcellular location is the cytoplasm. It catalyses the reaction tRNA(Gly) + glycine + ATP = glycyl-tRNA(Gly) + AMP + diphosphate. The protein is Glycine--tRNA ligase beta subunit of Colwellia psychrerythraea (strain 34H / ATCC BAA-681) (Vibrio psychroerythus).